Reading from the N-terminus, the 156-residue chain is MPRKGPAPKRPLINDPVYGSPLVTQLVNKILLDGKKSTAERIVYEALEVAREKTGTDPVVTLKRALDNVKPALEVRSRRVGGATYQVPVEVRPGRSTTLALRWLVTFSRQRREKTMVERLANELLDASNGLGAAVKRREDTHKMAEANKAFAHYRW.

It belongs to the universal ribosomal protein uS7 family. In terms of assembly, part of the 30S ribosomal subunit. Contacts proteins S9 and S11.

One of the primary rRNA binding proteins, it binds directly to 16S rRNA where it nucleates assembly of the head domain of the 30S subunit. Is located at the subunit interface close to the decoding center, probably blocks exit of the E-site tRNA. This is Small ribosomal subunit protein uS7 from Rhodococcus opacus (strain B4).